A 405-amino-acid chain; its full sequence is Transposase from transposon Tn916 (405 aa).

Residues 79-163 (GKKMTLCQLY…SLKASFYIAI (85 aa)) enclose the Core-binding (CB) domain. A Tyr recombinase domain is found at 186 to 392 (VPKTVLTEEQ…TFDSAMAEMK (207 aa)). Catalysis depends on residues arginine 225, lysine 264, histidine 343, arginine 346, and histidine 369. Residue tyrosine 379 is the O-(3'-phospho-DNA)-tyrosine intermediate of the active site.

The protein belongs to the 'phage' integrase family.

The chain is Transposase from transposon Tn916 (Int-Tn) from Enterococcus faecalis (Streptococcus faecalis).